A 341-amino-acid chain; its full sequence is N-acetyl-gamma-glutamyl-phosphate reductase (341 aa).

C145 is an active-site residue.

This sequence belongs to the NAGSA dehydrogenase family. Type 1 subfamily.

Its subcellular location is the cytoplasm. It carries out the reaction N-acetyl-L-glutamate 5-semialdehyde + phosphate + NADP(+) = N-acetyl-L-glutamyl 5-phosphate + NADPH + H(+). It functions in the pathway amino-acid biosynthesis; L-arginine biosynthesis; N(2)-acetyl-L-ornithine from L-glutamate: step 3/4. In terms of biological role, catalyzes the NADPH-dependent reduction of N-acetyl-5-glutamyl phosphate to yield N-acetyl-L-glutamate 5-semialdehyde. The protein is N-acetyl-gamma-glutamyl-phosphate reductase of Streptomyces clavuligerus.